The chain runs to 43 residues: Protein PsbN (43 aa).

The helical transmembrane segment at 5-27 (TLVXISISGSLVSFTGYALYTAF) threads the bilayer.

This sequence belongs to the PsbN family.

It localises to the plastid. It is found in the chloroplast thylakoid membrane. In terms of biological role, may play a role in photosystem I and II biogenesis. The protein is Protein PsbN of Calycanthus floridus (Eastern sweetshrub).